Consider the following 145-residue polypeptide: Neutral phospholipase A2 paradoxin-like beta chain (145 aa).

Residues methionine 1–leucine 27 form the signal peptide. 7 disulfides stabilise this stretch: cysteine 38-cysteine 98, cysteine 54-cysteine 144, cysteine 56-cysteine 72, cysteine 71-cysteine 125, cysteine 78-cysteine 118, cysteine 87-cysteine 111, and cysteine 105-cysteine 116.

Belongs to the phospholipase A2 family. Group I subfamily. N49 sub-subfamily. As to quaternary structure, heterotrimer of alpha, beta, and gamma chains; non-covalently linked. In terms of tissue distribution, expressed by the venom gland.

It is found in the secreted. Its function is as follows. Heterotrimer: Snake venom phospholipase A2 (PLA2) heterotrimer that acts as a potent presynaptic neurotoxin by blocking synaptic transmission and synaptic vesicle recycling. May act by binding in a calcium-dependent fashion to neurotonal pentraxin-1 (NPTX1) and neurotonal pentraxin-2 (NPTX2), but not to neuronal pentraxin receptor (NPTXR). Also binds to taipoxin-associated calcium binding protein 49 (RCN2), a protein localized in the lumen of endoplasmic reticulum. Monomer (beta chain): Snake venom phospholipase A2 homolog that is neither toxic nor enzymatically active. Does not bind calcium. This is Neutral phospholipase A2 paradoxin-like beta chain from Oxyuranus microlepidotus (Inland taipan).